The chain runs to 331 residues: tRNA-cytidine(32) 2-sulfurtransferase (331 aa).

A PP-loop motif motif is present at residues 71-76; the sequence is SGGKDS. Cysteine 146, cysteine 149, and cysteine 237 together coordinate [4Fe-4S] cluster.

Belongs to the TtcA family. As to quaternary structure, homodimer. It depends on Mg(2+) as a cofactor. Requires [4Fe-4S] cluster as cofactor.

It localises to the cytoplasm. It carries out the reaction cytidine(32) in tRNA + S-sulfanyl-L-cysteinyl-[cysteine desulfurase] + AH2 + ATP = 2-thiocytidine(32) in tRNA + L-cysteinyl-[cysteine desulfurase] + A + AMP + diphosphate + H(+). It functions in the pathway tRNA modification. Functionally, catalyzes the ATP-dependent 2-thiolation of cytidine in position 32 of tRNA, to form 2-thiocytidine (s(2)C32). The sulfur atoms are provided by the cysteine/cysteine desulfurase (IscS) system. This is tRNA-cytidine(32) 2-sulfurtransferase from Burkholderia multivorans (strain ATCC 17616 / 249).